A 134-amino-acid polypeptide reads, in one-letter code: UPF0412 protein YaaI (134 aa).

Positions 1-23 are cleaved as a signal peptide; sequence MKSVFTISASLAISLMLCCTAQA.

The protein belongs to the UPF0412 family.

The sequence is that of UPF0412 protein YaaI from Escherichia coli O157:H7.